Here is a 1342-residue protein sequence, read N- to C-terminus: DNA-directed RNA polymerase subunit beta (1342 aa).

The protein belongs to the RNA polymerase beta chain family. The RNAP catalytic core consists of 2 alpha, 1 beta, 1 beta' and 1 omega subunit. When a sigma factor is associated with the core the holoenzyme is formed, which can initiate transcription.

The catalysed reaction is RNA(n) + a ribonucleoside 5'-triphosphate = RNA(n+1) + diphosphate. Functionally, DNA-dependent RNA polymerase catalyzes the transcription of DNA into RNA using the four ribonucleoside triphosphates as substrates. The protein is DNA-directed RNA polymerase subunit beta of Edwardsiella ictaluri (strain 93-146).